The sequence spans 3938 residues: Protein bassoon (3938 aa).

The tract at residues 1-158 is disordered; it reads MGNEASLEGG…PTSPYSVPQI (158 aa). A lipid anchor (N-myristoyl glycine) is attached at glycine 2. The segment covering 9–29 has biased composition (gly residues); that stretch reads GGAGEGPLPPGGSGLGPGPGA. A compositionally biased stretch (low complexity) spans 31-61; it reads KPPSALAGGGQLPVAGAARAAGPPTPGLGLV. The segment at 62-70 is 4 X 2 AA tandem repeats of P-G; the sequence is PGPGPGPGP. Polar residues-rich tracts occupy residues 86–98 and 127–154; these read QRATSPTPKQASA and QVDSRTQRSGRSPSVSPDRGSTPTSPYS. Serine 142 carries the phosphoserine modification. Position 145 is an omega-N-methylarginine (arginine 145). 2 C4-type zinc fingers span residues 167–190 and 195–217; these read CPICKTSDLTSTSSQPNFNTCTQC and CNQCGFNPNPHLTQVKEWLCLNC. Disordered regions lie at residues 228–346 and 361–456; these read TTAP…LTGK and LMSV…KTMP. Positions 230–240 are enriched in polar residues; the sequence is APRSKSQQQLH. Residues serine 241 and serine 245 each carry the phosphoserine modification. Polar residues predominate over residues 361–376; it reads LMSVQPEADTQGQPSP. Over residues 394–406 the composition is skewed to pro residues; it reads PRPPGSGPGPGPT. 2 consecutive C4-type zinc fingers follow at residues 462–485 and 490–512; these read CPLCQAELNVGSRGPANYNTCTAC and CTLCGFNPTPHLVEKTEWLCLNC. 4 disordered regions span residues 523–921, 934–1247, 1294–1541, and 1561–1611; these read GEPA…LQGG, GRLW…TPAG, MDPM…WQQS, and RMVH…RAPS. A compositionally biased stretch (pro residues) spans 526–539; it reads APLPLPTPQEPPAG. The segment covering 548 to 589 has biased composition (low complexity); sequence SPLKQKGPQGPGQPSGSLPPKASPQAAKASPQAAKASPQAKP. 3 consecutive repeat copies span residues 568-574, 575-581, and 582-588. The segment at 568 to 588 is 3 X 7 AA tandem repeats of K-A-S-P-Q-A-[AK]; it reads KASPQAAKASPQAAKASPQAK. Pro residues predominate over residues 616–629; that stretch reads VPKPPPETAVPPGT. Over residues 668 to 677 the composition is skewed to polar residues; sequence QDLSRSPQSL. The span at 678 to 692 shows a compositional bias: low complexity; it reads SDTGYSSDGVSSSQS. Positions 693–702 are enriched in polar residues; sequence EITGVVQQEV. Composition is skewed to acidic residues over residues 769 to 784 and 847 to 858; these read FDSDEELGDILEEDDS and SAEEDNLEEDDT. Arginine 863 is modified (omega-N-methylarginine). At serine 965 the chain carries Phosphoserine. A compositionally biased stretch (low complexity) spans 979–996; sequence PASTPSYTSGTSPTSLSS. Positions 1032 to 1087 form a coiled coil; that stretch reads IEDSSEEEELREEEELLREQEKMREVEQQRIRSTARKTRRDKEELRAQRRRERSKT. A compositionally biased stretch (acidic residues) spans 1034-1047; that stretch reads DSSEEEELREEEEL. Serine 1035 and serine 1036 each carry phosphoserine. A compositionally biased stretch (basic and acidic residues) spans 1048 to 1061; sequence LREQEKMREVEQQR. Serine 1085 is subject to Phosphoserine. Position 1087 is a phosphothreonine (threonine 1087). Phosphoserine occurs at positions 1093 and 1099. Basic and acidic residues predominate over residues 1102-1117; it reads EELRQAAEMEELHRSS. 2 stretches are compositionally biased toward low complexity: residues 1118–1128 and 1158–1175; these read CSEYSPSPSLD and SPTETPSGSSTTPSSGRP. The stretch at 1176 to 1203 forms a coiled coil; that stretch reads LKSAEEAYEDMMRKAELLQRQQGQAAGA. Basic and acidic residues predominate over residues 1177–1192; it reads KSAEEAYEDMMRKAEL. Over residues 1194–1204 the composition is skewed to low complexity; it reads QRQQGQAAGAR. Residues 1211-1224 show a composition bias toward polar residues; the sequence is SQPTGPRSQGSFEY. Serine 1221 is modified (phosphoserine). Residues 1318 to 1328 are compositionally biased toward low complexity; that stretch reads SFPTSTSSDSS. Threonine 1339 is a glycosylation site (O-linked (GlcNAc) threonine). The segment covering 1342-1351 has biased composition (basic and acidic residues); that stretch reads FAKEPQEPLK. Low complexity-rich tracts occupy residues 1352 to 1364 and 1374 to 1386; these read LHSSPASPSLASK and PGTPATTAMAPCP. An O-linked (GlcNAc) threonine glycan is attached at threonine 1380. The span at 1402-1426 shows a compositional bias: polar residues; it reads SPSTSSTIHSYGQPPTTANYGSQTE. Phosphoserine is present on residues serine 1470, serine 1479, and serine 1481. A compositionally biased stretch (low complexity) spans 1476–1487; sequence STPSESPTFSPS. 2 stretches are compositionally biased toward polar residues: residues 1496-1510 and 1561-1597; these read EFSTQTPSLTPSSDI and RMVHASASTSPLCSPTDSQPASHSYSQTTPPSASQMP. 2 positions are modified to omega-N-methylarginine: arginine 1780 and arginine 1784. An Asymmetric dimethylarginine; alternate modification is found at arginine 1794. The residue at position 1794 (arginine 1794) is an Omega-N-methylarginine; alternate. Arginine 1806 is subject to Omega-N-methylarginine. Residues 1914–1964 are disordered; that stretch reads PSAPDKSVTDAALPGQSSGPFYSPRDPEPPEPLTFRAQGVVGPGPHEEQRP. The O-linked (GlcNAc) threonine glycan is linked to threonine 1922. Phosphoserine occurs at positions 1978 and 2034. Omega-N-methylarginine occurs at positions 2039 and 2069. Asymmetric dimethylarginine is present on residues arginine 2243, arginine 2253, and arginine 2259. Residues 2280-2305 form a disordered region; it reads AAKASGAGGPPRPELPAGGAREEPLS. O-linked (GlcNAc) threonine glycosylation is present at threonine 2307. Disordered stretches follow at residues 2318–2343 and 2461–2486; these read VAQAPAPPPGQKPAGDAAAGSGSGVL and EEQKQRQKAPFPATCEAPSRGPPPAA. Positions 2345-2470 form a coiled coil; that stretch reads RPVMEKEEAS…EEQKQRQKAP (126 aa). An O-linked (GlcNAc) threonine glycan is attached at threonine 2510. The interval 2513 to 2648 is disordered; the sequence is PGQAREPVLH…HEASASSSAA (136 aa). The span at 2527-2537 shows a compositional bias: polar residues; that stretch reads SSASDMSLQTE. The residue at position 2564 (serine 2564) is a Phosphoserine. Threonine 2581 and threonine 2608 each carry phosphothreonine. Residues 2629-2641 are compositionally biased toward basic and acidic residues; it reads RHSDSGSDSKHEA. Threonine 2685 is a glycosylation site (O-linked (GlcNAc) threonine). The interaction with DAO stretch occupies residues 2715-3263; sequence EPDGQAQGVA…GGVSGRPGKD (549 aa). Serine 2796, serine 2845, and serine 2851 each carry phosphoserine. The segment at 2839–2859 is disordered; sequence TLQRSLSDPKPLSPTAEESAK. An O-linked (GlcNAc) threonine glycan is attached at threonine 2930. The stretch at 2933-2975 forms a coiled coil; sequence SLLRELDRDLRLVEHESTKLRKKQAELDEEEKEIDAKLKYLEL. The segment at 2934-2996 is sufficient for binding to ERC2; that stretch reads LLRELDRDLR…DRVGRDYPPL (63 aa). A Phosphoserine modification is found at serine 3007. Polar residues predominate over residues 3055–3068; the sequence is TQYTAGSSGPTQNG. 4 disordered regions span residues 3055-3148, 3162-3399, 3414-3546, and 3569-3910; these read TQYT…ADLE, AVTV…SRKF, QQRY…PRAH, and YHLG…VFSK. Residues 3184–3196 show a composition bias toward basic and acidic residues; it reads EHGKAPEHPRGGD. Polar residues predominate over residues 3198 to 3222; it reads SSVSQSPAPTYPSDSHYTSLEQNVP. Residue serine 3286 is modified to Phosphoserine. Polar residues predominate over residues 3304-3315; sequence ESNGRPASTHYY. Basic and acidic residues-rich tracts occupy residues 3316–3328, 3358–3377, and 3450–3469; these read SDSDYRHGARADK, QGMEQKISKFSPIEEAKDVE, and LSSHDFSSRSKGYERERETA. Serine 3368 carries the phosphoserine modification. An Omega-N-methylarginine modification is found at arginine 3488. Residues 3506–3520 show a composition bias toward low complexity; the sequence is PLGRPRPAGGALPPG. 2 stretches are compositionally biased toward basic and acidic residues: residues 3535-3546 and 3578-3588; these read VQEHVKDGPRAH and WFDKPRDARSD. A compositionally biased stretch (basic residues) spans 3638 to 3651; it reads EHRHHGDHGRHSGR. Over residues 3652–3676 the composition is skewed to basic and acidic residues; sequence HAGEEPGRRAARPHARDMGRHETRP. Residues 3751–3820 show a composition bias toward low complexity; it reads PQQSQPPSSR…ARLQQQSQPT (70 aa). A coiled-coil region spans residues 3772–3803; that stretch reads QTQQQQQQQQQQQQQQQQQQQQQQQQGLGQQA. Position 3822 is an omega-N-methylarginine (arginine 3822). A compositionally biased stretch (pro residues) spans 3834–3848; it reads KPQPGPTTAPGPQPA. Low complexity-rich tracts occupy residues 3860–3887 and 3894–3904; these read KPAAKAPQQGRAPQAQSAPGPAGAKTGA and GAPAGQPAAEG.

Interacts with PCLO, ERC2/CAST1, RIMS1 and UNC13A. Interacts with TPRG1L. Interacts with DYNLL1 and DYNLL2; these interactions potentially link PTVs to dynein and myosin V motor complexes. Interacts with ATG5; this interaction is important for the regulation of presynaptic autophagy. Interacts (via C-terminus) with TRIO (via N-terminus). Interacts with CTBP1. Interacts with SIAH1; this interaction negatively regulates SIAH1 E3 ligase activity. Interacts (via coiled region) with DAO; the interaction is direct. Myristoylated. The N-terminal myristoylation is not sufficient for presynaptic localization. In terms of tissue distribution, detected at synapses in the stratum lucidum in the hippocampus CA3 region (at protein level).

It localises to the cytoplasm. The protein localises to the presynaptic active zone. The protein resides in the cytoskeleton. It is found in the cytoplasmic vesicle. Its subcellular location is the secretory vesicle. It localises to the synaptic vesicle membrane. Its function is as follows. Scaffold protein of the presynaptic cytomatrix at the active zone (CAZ) which is the place in the synapse where neurotransmitter is released. After synthesis, participates in the formation of Golgi-derived membranous organelles termed Piccolo-Bassoon transport vesicles (PTVs) that are transported along axons to sites of nascent synaptic contacts. At the presynaptic active zone, regulates the spatial organization of synaptic vesicle cluster, the protein complexes that execute membrane fusion and compensatory endocytosis. Also functions in processes other than assembly such as the regulation of specific presynaptic protein ubiquitination by interacting with SIAH1 or the regulation of presynaptic autophagy by associating with ATG5. Also mediates synapse to nucleus communication leading to reconfiguration of gene expression by associating with the transcriptional corepressor CTBP1 and by subsequently reducing the size of its pool available for nuclear import. Inhibits the activity of the proportion of DAO enzyme that localizes to the presynaptic active zone, which may modulate synaptic transmission. The sequence is that of Protein bassoon from Rattus norvegicus (Rat).